Consider the following 299-residue polypeptide: GTPase Era (299 aa).

Residues 8–176 (RCGYVAIVGR…EKLVGERLPE (169 aa)) form the Era-type G domain. The interval 16-23 (GRPNVGKS) is G1. 16 to 23 (GRPNVGKS) is a GTP binding site. The interval 42–46 (QTTRH) is G2. The interval 63–66 (DTPG) is G3. GTP-binding positions include 63–67 (DTPGL) and 125–128 (NKAD). Residues 125-128 (NKAD) form a G4 region. Residues 155–157 (ISA) are G5. Residues 199 to 283 (IREKIMRQLG…MLNLWVKVKG (85 aa)) enclose the KH type-2 domain.

It belongs to the TRAFAC class TrmE-Era-EngA-EngB-Septin-like GTPase superfamily. Era GTPase family. As to quaternary structure, monomer.

It localises to the cytoplasm. The protein localises to the cell inner membrane. Functionally, an essential GTPase that binds both GDP and GTP, with rapid nucleotide exchange. Plays a role in 16S rRNA processing and 30S ribosomal subunit biogenesis and possibly also in cell cycle regulation and energy metabolism. The sequence is that of GTPase Era from Ectopseudomonas mendocina (strain ymp) (Pseudomonas mendocina).